Here is a 284-residue protein sequence, read N- to C-terminus: Bifunctional protein FolD (284 aa).

Residues 164-166 and Ile-230 each bind NADP(+); that span reads GTS.

The protein belongs to the tetrahydrofolate dehydrogenase/cyclohydrolase family. As to quaternary structure, homodimer.

The catalysed reaction is (6R)-5,10-methylene-5,6,7,8-tetrahydrofolate + NADP(+) = (6R)-5,10-methenyltetrahydrofolate + NADPH. The enzyme catalyses (6R)-5,10-methenyltetrahydrofolate + H2O = (6R)-10-formyltetrahydrofolate + H(+). Its pathway is one-carbon metabolism; tetrahydrofolate interconversion. Its function is as follows. Catalyzes the oxidation of 5,10-methylenetetrahydrofolate to 5,10-methenyltetrahydrofolate and then the hydrolysis of 5,10-methenyltetrahydrofolate to 10-formyltetrahydrofolate. The chain is Bifunctional protein FolD from Mycoplasma capricolum subsp. capricolum (strain California kid / ATCC 27343 / NCTC 10154).